We begin with the raw amino-acid sequence, 207 residues long: CASP-like protein F16 (207 aa).

Positions 1–30 (MEKSEKGNGVAPATRSPMALMGSSRNENQE) are disordered. Residues 1–37 (MEKSEKGNGVAPATRSPMALMGSSRNENQEVNTSMRT) lie on the Cytoplasmic side of the membrane. Residues 38–58 (AETMLRLVPMALGVAALVVML) form a helical membrane-spanning segment. The Extracellular segment spans residues 59-79 (KNSQSNDFGSVSYSDLGAFRY). Residues 80-100 (LVHANGICAGYSLLSAIIAAV) traverse the membrane as a helical segment. The Cytoplasmic portion of the chain corresponds to 101–108 (PSPSTMPR). The chain crosses the membrane as a helical span at residues 109–129 (AWTFFLLDQILTYVILGAAAV). The Extracellular segment spans residues 130–159 (STEVLYLANKGDSAITWSAACGTFAGFCHK). The chain crosses the membrane as a helical span at residues 160-180 (ATIAVVITFVAVICYAVLSLV). The Cytoplasmic portion of the chain corresponds to 181–207 (SSYRLFTKFDAPVNYPSKTIEATVFHG).

The protein belongs to the Casparian strip membrane proteins (CASP) family. In terms of assembly, homodimer and heterodimers.

It localises to the cell membrane. In Gossypium hirsutum (Upland cotton), this protein is CASP-like protein F16 (F16).